We begin with the raw amino-acid sequence, 543 residues long: Alanine aminotransferase 1, mitochondrial (543 aa).

A mitochondrion-targeting transit peptide spans 1 to 55 (MRRFVIGQAKNLIDQSRRRQLHHHKNLSFVSLIPPFSAPSDSSSRHLSSSSSSDM). Residues 43-63 (SSRHLSSSSSSDMSASDSSSS) are compositionally biased toward low complexity. The interval 43–64 (SSRHLSSSSSSDMSASDSSSSL) is disordered. At Ser-56 the chain carries N-acetylserine. Residues Tyr-173, 209–210 (AS), Tyr-235, Asn-291, Tyr-322, and 354–356 (SFQ) each bind pyridoxal 5'-phosphate. Lys-360 bears the N6-(pyridoxal phosphate)lysine mark. Arg-369 and Asn-397 together coordinate pyridoxal 5'-phosphate.

This sequence belongs to the class-I pyridoxal-phosphate-dependent aminotransferase family. Alanine aminotransferase subfamily. Homodimer. It depends on pyridoxal 5'-phosphate as a cofactor. Post-translationally, the N-terminus is blocked. Mostly expressed in roots and shoots, mostly in vascular tissues, and, to a lower extent, in flowers and leaves.

It localises to the mitochondrion. The enzyme catalyses L-alanine + 2-oxoglutarate = pyruvate + L-glutamate. It functions in the pathway photosynthesis; C4 acid pathway. The protein operates within amino-acid degradation; L-alanine degradation via transaminase pathway; pyruvate from L-alanine: step 1/1. Is the major alanine aminotransferase in roots that catalyzes the conversion of alanine to pyruvate. Involved in the rapid conversion of alanine to pyruvate during recovery from low-oxygen stress. This chain is Alanine aminotransferase 1, mitochondrial, found in Arabidopsis thaliana (Mouse-ear cress).